Reading from the N-terminus, the 56-residue chain is Photosystem II reaction center protein K (56 aa).

A propeptide spanning residues 1–19 (MFNIFLDDAFIHSNNPFFG) is cleaved from the precursor. The chain crosses the membrane as a helical span at residues 35 to 55 (MPIIPVLSFLLAFVWQAAVSF).

It belongs to the PsbK family. In terms of assembly, PSII is composed of 1 copy each of membrane proteins PsbA, PsbB, PsbC, PsbD, PsbE, PsbF, PsbH, PsbI, PsbJ, PsbK, PsbL, PsbM, PsbT, PsbX, PsbY, PsbZ, Psb30/Ycf12, at least 3 peripheral proteins of the oxygen-evolving complex and a large number of cofactors. It forms dimeric complexes.

It localises to the plastid. The protein localises to the chloroplast thylakoid membrane. One of the components of the core complex of photosystem II (PSII). PSII is a light-driven water:plastoquinone oxidoreductase that uses light energy to abstract electrons from H(2)O, generating O(2) and a proton gradient subsequently used for ATP formation. It consists of a core antenna complex that captures photons, and an electron transfer chain that converts photonic excitation into a charge separation. This chain is Photosystem II reaction center protein K, found in Pinus thunbergii (Japanese black pine).